Consider the following 823-residue polypeptide: Putative E3 ubiquitin-protein ligase RF4 (823 aa).

Disordered regions lie at residues 24 to 72 (TVSP…NGSV), 224 to 291 (SKLS…CSGS), and 432 to 464 (ESVT…SEEK). Polar residues predominate over residues 61–72 (KPQNHLSGNGSV). Low complexity predominate over residues 224-240 (SKLSDSESLGAESNPPK). Residues 267–282 (FPNTPNSKKTQSSGTT) show a composition bias toward polar residues. Positions 453–464 (SEKKSGSESEEK) are enriched in basic and acidic residues. Residues 536-738 (ELKALRKERE…ELKLKSDYSR (203 aa)) are a coiled coil. The RING-type zinc finger occupies 768-808 (CVMCLSEEMSVIFLPCAHQVLCFKCNQLHEKEGMMDCPSCR).

The protein belongs to the RING-type zinc finger family.

It carries out the reaction S-ubiquitinyl-[E2 ubiquitin-conjugating enzyme]-L-cysteine + [acceptor protein]-L-lysine = [E2 ubiquitin-conjugating enzyme]-L-cysteine + N(6)-ubiquitinyl-[acceptor protein]-L-lysine.. It functions in the pathway protein modification; protein ubiquitination. The sequence is that of Putative E3 ubiquitin-protein ligase RF4 (RF4) from Arabidopsis thaliana (Mouse-ear cress).